A 106-amino-acid polypeptide reads, in one-letter code: Large ribosomal subunit protein uL23 (106 aa).

This sequence belongs to the universal ribosomal protein uL23 family. As to quaternary structure, part of the 50S ribosomal subunit. Contacts protein L29, and trigger factor when it is bound to the ribosome.

In terms of biological role, one of the early assembly proteins it binds 23S rRNA. One of the proteins that surrounds the polypeptide exit tunnel on the outside of the ribosome. Forms the main docking site for trigger factor binding to the ribosome. This chain is Large ribosomal subunit protein uL23, found in Neisseria meningitidis serogroup A / serotype 4A (strain DSM 15465 / Z2491).